The following is a 121-amino-acid chain: Large ribosomal subunit protein uL18 (121 aa).

It belongs to the universal ribosomal protein uL18 family. Part of the 50S ribosomal subunit; part of the 5S rRNA/L5/L18/L25 subcomplex. Contacts the 5S and 23S rRNAs.

This is one of the proteins that bind and probably mediate the attachment of the 5S RNA into the large ribosomal subunit, where it forms part of the central protuberance. The chain is Large ribosomal subunit protein uL18 from Streptococcus thermophilus (strain CNRZ 1066).